A 157-amino-acid chain; its full sequence is uncharacterized protein (157 aa).

The 138-residue stretch at 9 to 146 (LLINYKTLDE…GDFYVWHPET (138 aa)) folds into the N-acetyltransferase domain.

This is an uncharacterized protein from Bacillus cereus (strain AH187).